The sequence spans 64 residues: Cytochrome b-c1 complex subunit 9 (64 aa).

Over 2–18 the chain is Mitochondrial matrix; it reads SSPTIPSRLYSLLFRRT. The helical transmembrane segment at 19–43 threads the bilayer; sequence STFALTIAVGALFFERAFDQGADAI. At 44 to 63 the chain is on the mitochondrial intermembrane side; sequence YEHINEGKLWKHIKHKYENK.

This sequence belongs to the UQCR10/QCR9 family. Component of the ubiquinol-cytochrome c oxidoreductase (cytochrome b-c1 complex, complex III, CIII), a multisubunit enzyme composed of 11 subunits. The complex is composed of 3 respiratory subunits cytochrome b, cytochrome c1 and Rieske protein UQCRFS1, 2 core protein subunits UQCRC1/QCR1 and UQCRC2/QCR2, and 6 low-molecular weight protein subunits UQCRH/QCR6, UQCRB/QCR7, UQCRQ/QCR8, UQCR10/QCR9, UQCR11/QCR10 and subunit 9, the cleavage product of Rieske protein UQCRFS1. The complex exists as an obligatory dimer and forms supercomplexes (SCs) in the inner mitochondrial membrane with NADH-ubiquinone oxidoreductase (complex I, CI) and cytochrome c oxidase (complex IV, CIV), resulting in different assemblies (supercomplex SCI(1)III(2)IV(1) and megacomplex MCI(2)III(2)IV(2)). Interacts with STMP1.

It localises to the mitochondrion inner membrane. Functionally, component of the ubiquinol-cytochrome c oxidoreductase, a multisubunit transmembrane complex that is part of the mitochondrial electron transport chain which drives oxidative phosphorylation. The respiratory chain contains 3 multisubunit complexes succinate dehydrogenase (complex II, CII), ubiquinol-cytochrome c oxidoreductase (cytochrome b-c1 complex, complex III, CIII) and cytochrome c oxidase (complex IV, CIV), that cooperate to transfer electrons derived from NADH and succinate to molecular oxygen, creating an electrochemical gradient over the inner membrane that drives transmembrane transport and the ATP synthase. The cytochrome b-c1 complex catalyzes electron transfer from ubiquinol to cytochrome c, linking this redox reaction to translocation of protons across the mitochondrial inner membrane, with protons being carried across the membrane as hydrogens on the quinol. In the process called Q cycle, 2 protons are consumed from the matrix, 4 protons are released into the intermembrane space and 2 electrons are passed to cytochrome c. This chain is Cytochrome b-c1 complex subunit 9 (Uqcr10), found in Mus musculus (Mouse).